The sequence spans 417 residues: uncharacterized protein (417 aa).

This is an uncharacterized protein from Sulfolobus islandicus rod-shaped virus 1 (SIRV-1).